The chain runs to 70 residues: uncharacterized protein (70 aa).

This is an uncharacterized protein from Rickettsia conorii (strain ATCC VR-613 / Malish 7).